We begin with the raw amino-acid sequence, 89 residues long: MSEPGDLSQTIVEEGGPEQETATPENGVIKSESLDEEEKLELQRRLVAQNQERRKSKSGAGKGKLTRSLAVCEESSARPGGESLQDQTL.

The disordered stretch occupies residues 1-89 (MSEPGDLSQT…GGESLQDQTL (89 aa)). Ser-2 is modified (N-acetylserine). Phosphoserine is present on residues Ser-33 and Ser-56.

In terms of assembly, interacts with CALM1. In terms of processing, phosphorylation at Ser-56 favors interaction with CALM1.

It is found in the cytoplasm. May act as a competitive inhibitor of calmodulin-dependent enzymes such as calcineurin in neurons. The chain is cAMP-regulated phosphoprotein 21 (ARPP21) from Bos taurus (Bovine).